The primary structure comprises 496 residues: NADP-dependent glyceraldehyde-3-phosphate dehydrogenase (496 aa).

At Ala2 the chain carries N-acetylalanine. Position 4 is a phosphothreonine (Thr4). Substrate contacts are provided by residues Arg116 and 169–170 (NY). The NADP(+) site is built by Lys192, Thr195, and Asp230. 245–249 (GGDTG) contacts NAD(+). Catalysis depends on Glu264, which acts as the Proton acceptor. Residue 297–299 (RCT) participates in substrate binding. Cys298 serves as the catalytic Nucleophile. Glu391 provides a ligand contact to NADP(+). Arg451 contributes to the substrate binding site.

Belongs to the aldehyde dehydrogenase family.

The protein resides in the cytoplasm. It carries out the reaction D-glyceraldehyde 3-phosphate + NADP(+) + H2O = (2R)-3-phosphoglycerate + NADPH + 2 H(+). Its function is as follows. Important as a means of generating NADPH for biosynthetic reactions. This Arabidopsis thaliana (Mouse-ear cress) protein is NADP-dependent glyceraldehyde-3-phosphate dehydrogenase (ALDH11A3).